Consider the following 270-residue polypeptide: Small ribosomal subunit protein bS1m (270 aa).

Residues 218–250 form a disordered region; the sequence is TKQGFKHLGPKPLAYTEKKRETTKQSTKNNVFQ.

This sequence belongs to the bacterial ribosomal protein bS1 family.

It localises to the mitochondrion. The sequence is that of Small ribosomal subunit protein bS1m (RPS1) from Marchantia polymorpha (Common liverwort).